A 156-amino-acid chain; its full sequence is Small ribosomal subunit protein uS7 (156 aa).

The protein belongs to the universal ribosomal protein uS7 family. Part of the 30S ribosomal subunit. Contacts proteins S9 and S11.

In terms of biological role, one of the primary rRNA binding proteins, it binds directly to 16S rRNA where it nucleates assembly of the head domain of the 30S subunit. Is located at the subunit interface close to the decoding center, probably blocks exit of the E-site tRNA. This is Small ribosomal subunit protein uS7 from Symbiobacterium thermophilum (strain DSM 24528 / JCM 14929 / IAM 14863 / T).